Reading from the N-terminus, the 499-residue chain is Glutamate--tRNA ligase (499 aa).

The 'HIGH' region motif lies at 12 to 22 (PSPTGHLHIGN). Residues 259–263 (KLSKR) carry the 'KMSKS' region motif. Lys-262 is a binding site for ATP.

The protein belongs to the class-I aminoacyl-tRNA synthetase family. Glutamate--tRNA ligase type 1 subfamily. In terms of assembly, monomer.

The protein localises to the cytoplasm. The catalysed reaction is tRNA(Glu) + L-glutamate + ATP = L-glutamyl-tRNA(Glu) + AMP + diphosphate. Functionally, catalyzes the attachment of glutamate to tRNA(Glu) in a two-step reaction: glutamate is first activated by ATP to form Glu-AMP and then transferred to the acceptor end of tRNA(Glu). The chain is Glutamate--tRNA ligase from Lactobacillus johnsonii (strain CNCM I-12250 / La1 / NCC 533).